The sequence spans 142 residues: Large ribosomal subunit protein uL13 (142 aa).

Belongs to the universal ribosomal protein uL13 family. As to quaternary structure, part of the 50S ribosomal subunit.

This protein is one of the early assembly proteins of the 50S ribosomal subunit, although it is not seen to bind rRNA by itself. It is important during the early stages of 50S assembly. This chain is Large ribosomal subunit protein uL13, found in Cupriavidus metallidurans (strain ATCC 43123 / DSM 2839 / NBRC 102507 / CH34) (Ralstonia metallidurans).